The following is a 307-amino-acid chain: Transcription initiation factor IIF subunit beta (307 aa).

Residues 1 to 12 (MSEEKPTVRTEE) show a composition bias toward basic and acidic residues. 2 disordered regions span residues 1–22 (MSEEKPTVRTEEDDRYEDDAGD) and 261–307 (VELR…IDVV). The segment covering 13-22 (DDRYEDDAGD) has biased composition (acidic residues). Residues 263-290 (LRNQQASQSESSSIDHTGKNTSPDNPGT) show a composition bias toward polar residues. Residues 292 to 307 (AEEDEDDDGVEMIDVV) are compositionally biased toward acidic residues.

Belongs to the TFIIF beta subunit family. In terms of assembly, component of the fcp1/TFIIF/polII complex via interaction of tfg3 with both tfg1/TFIIF-alpha and tfg2/TFIIF-beta subunits.

The protein localises to the nucleus. In terms of biological role, TFIIF is a general transcription initiation factor that binds to RNA polymerase II and helps to recruit it to the initiation complex in collaboration with TFIIB. It promotes transcription elongation. This chain is Transcription initiation factor IIF subunit beta (tfg2), found in Schizosaccharomyces pombe (strain 972 / ATCC 24843) (Fission yeast).